The chain runs to 389 residues: Methane monooxygenase component A beta chain (389 aa).

In terms of assembly, m.capsulatus has two forms of methane monooxygenase, a soluble and a membrane-bound type. The soluble type consists of four components (A to D): protein A, comprising three chains, in an alpha-2, beta-2, gamma-2 configuration, is a nonheme iron protein containing an unusual mu-hydroxo bridge structure at its active site and interacts with both oxygen and methane.

It carries out the reaction methane + NADH + O2 + H(+) = methanol + NAD(+) + H2O. The enzyme catalyses methane + NADPH + O2 + H(+) = methanol + NADP(+) + H2O. Functionally, responsible for the initial oxygenation of methane to methanol in methanotrophs. It also catalyzes the monohydroxylation of a variety of unactivated alkenes, alicyclic, aromatic and heterocyclic compounds. This Methylococcus capsulatus (strain ATCC 33009 / NCIMB 11132 / Bath) protein is Methane monooxygenase component A beta chain (mmoY).